We begin with the raw amino-acid sequence, 406 residues long: 4-O-methyl-glucuronoyl methylesterase (406 aa).

A signal peptide spans 1–17 (MAFRWLSFLLLALPVLA). C31 and C64 are oxidised to a cystine. Residues N100, N110, N122, and N178 are each glycosylated (N-linked (GlcNAc...) asparagine). Positions 215-220 (GCSRDG) match the GXSYXG catalytic site motif motif. 2 cysteine pairs are disulfide-bonded: C216–C352 and C248–C324. The active-site Nucleophile is S217. 3 residues coordinate substrate: K221, Q263, and E271. Residue N285 is glycosylated (N-linked (GlcNAc...) asparagine). Substrate is bound at residue W315. The N-linked (GlcNAc...) asparagine glycan is linked to N348. Residue H351 is the Proton donor/acceptor of the active site. Residues N376, N387, and N398 are each glycosylated (N-linked (GlcNAc...) asparagine).

It belongs to the carbohydrate esterase 15 (CE15) family.

It localises to the secreted. The catalysed reaction is a 4-O-methyl-alpha-D-glucuronosyl ester derivative + H2O = 4-O-methyl-alpha-D-glucuronate derivative + an alcohol + H(+). Functionally, glucuronoyl esterase which may play a significant role in biomass degradation, as it is considered to disconnect hemicellulose from lignin through the hydrolysis of the ester bond between 4-O-methyl-D-glucuronic acid residues of glucuronoxylans and aromatic alcohols of lignin. This Phanerochaete carnosa (strain HHB-10118-sp) (White-rot fungus) protein is 4-O-methyl-glucuronoyl methylesterase.